We begin with the raw amino-acid sequence, 339 residues long: Dihydroorotate dehydrogenase (quinone) (339 aa).

FMN contacts are provided by residues 61–65 (AGLDK) and Thr-85. Lys-65 contacts substrate. 110-114 (NRMGF) contributes to the substrate binding site. Residues Asn-138 and Asn-171 each coordinate FMN. Asn-171 is a substrate binding site. Ser-174 functions as the Nucleophile in the catalytic mechanism. Position 176 (Asn-176) interacts with substrate. The FMN site is built by Lys-216 and Thr-244. A substrate-binding site is contributed by 245 to 246 (NT). Residues Gly-267, Gly-296, and 317–318 (YS) contribute to the FMN site.

The protein belongs to the dihydroorotate dehydrogenase family. Type 2 subfamily. Monomer. Requires FMN as cofactor.

The protein localises to the cell membrane. The enzyme catalyses (S)-dihydroorotate + a quinone = orotate + a quinol. It functions in the pathway pyrimidine metabolism; UMP biosynthesis via de novo pathway; orotate from (S)-dihydroorotate (quinone route): step 1/1. Catalyzes the conversion of dihydroorotate to orotate with quinone as electron acceptor. The chain is Dihydroorotate dehydrogenase (quinone) from Pseudomonas fluorescens (strain Pf0-1).